Reading from the N-terminus, the 230-residue chain is Ribose-5-phosphate isomerase A (230 aa).

Substrate is bound by residues Ser29–Thr32, Asp86–Asp89, and Lys99–Gly102. Glu108 (proton acceptor) is an active-site residue. A substrate-binding site is contributed by Lys126.

Belongs to the ribose 5-phosphate isomerase family. In terms of assembly, homodimer.

The enzyme catalyses aldehydo-D-ribose 5-phosphate = D-ribulose 5-phosphate. Its pathway is carbohydrate degradation; pentose phosphate pathway; D-ribose 5-phosphate from D-ribulose 5-phosphate (non-oxidative stage): step 1/1. In terms of biological role, catalyzes the reversible conversion of ribose-5-phosphate to ribulose 5-phosphate. This is Ribose-5-phosphate isomerase A from Desulfatibacillum aliphaticivorans.